The primary structure comprises 389 residues: MTMMSDLTQDLVEEILSRVPITSLGAVRSTCKGWNALSKERILCIGEPKQQFLGFMMLDYRLCSMRFNLHGILNEDFVSISMYQVETSQVFYCAGLLLCVTREKSSRLIIWNPYLGQTRWINTKTTKTGYNTYALGCDNNKNHKILKVFCDDYQCYYEIYDVKSNSWSAFNVTDPNWHIDYDICALVNGNTYFLTKERILVEDSDEDEDEVETPEILICFDFTAERFGKFLHLPFQFDIDFGDTGGLSCVKEEKLAVLLKRYDQNVIEIWVTTKIEPNVVFWKPFLKVDIETVLGALLDFQLDSFFIDEEKKLAVVFSSNKSKCYKTAYIIGEDRYLKEVDLGECKPLRSPIVCFSSYVPSLVQINQIAVPKRRENKRKRKSKGKGREV.

One can recognise an F-box domain in the interval 2-49; sequence TMMSDLTQDLVEEILSRVPITSLGAVRSTCKGWNALSKERILCIGEPK.

In Arabidopsis thaliana (Mouse-ear cress), this protein is F-box protein At3g19880.